The primary structure comprises 227 residues: Cytochrome c oxidase subunit 2 (227 aa).

The Mitochondrial intermembrane segment spans residues methionine 1 to serine 14. A helical membrane pass occupies residues proline 15 to methionine 45. Topologically, residues leucine 46–glutamine 59 are mitochondrial matrix. Residues glutamate 60 to methionine 87 form a helical membrane-spanning segment. The Mitochondrial intermembrane portion of the chain corresponds to aspartate 88–leucine 227. Positions 161, 196, 198, 200, 204, and 207 each coordinate Cu cation. Glutamate 198 is a Mg(2+) binding site.

This sequence belongs to the cytochrome c oxidase subunit 2 family. As to quaternary structure, component of the cytochrome c oxidase (complex IV, CIV), a multisubunit enzyme composed of 14 subunits. The complex is composed of a catalytic core of 3 subunits MT-CO1, MT-CO2 and MT-CO3, encoded in the mitochondrial DNA, and 11 supernumerary subunits COX4I, COX5A, COX5B, COX6A, COX6B, COX6C, COX7A, COX7B, COX7C, COX8 and NDUFA4, which are encoded in the nuclear genome. The complex exists as a monomer or a dimer and forms supercomplexes (SCs) in the inner mitochondrial membrane with NADH-ubiquinone oxidoreductase (complex I, CI) and ubiquinol-cytochrome c oxidoreductase (cytochrome b-c1 complex, complex III, CIII), resulting in different assemblies (supercomplex SCI(1)III(2)IV(1) and megacomplex MCI(2)III(2)IV(2)). Found in a complex with TMEM177, COA6, COX18, COX20, SCO1 and SCO2. Interacts with TMEM177 in a COX20-dependent manner. Interacts with COX20. Interacts with COX16. Cu cation is required as a cofactor.

It localises to the mitochondrion inner membrane. It carries out the reaction 4 Fe(II)-[cytochrome c] + O2 + 8 H(+)(in) = 4 Fe(III)-[cytochrome c] + 2 H2O + 4 H(+)(out). Its function is as follows. Component of the cytochrome c oxidase, the last enzyme in the mitochondrial electron transport chain which drives oxidative phosphorylation. The respiratory chain contains 3 multisubunit complexes succinate dehydrogenase (complex II, CII), ubiquinol-cytochrome c oxidoreductase (cytochrome b-c1 complex, complex III, CIII) and cytochrome c oxidase (complex IV, CIV), that cooperate to transfer electrons derived from NADH and succinate to molecular oxygen, creating an electrochemical gradient over the inner membrane that drives transmembrane transport and the ATP synthase. Cytochrome c oxidase is the component of the respiratory chain that catalyzes the reduction of oxygen to water. Electrons originating from reduced cytochrome c in the intermembrane space (IMS) are transferred via the dinuclear copper A center (CU(A)) of subunit 2 and heme A of subunit 1 to the active site in subunit 1, a binuclear center (BNC) formed by heme A3 and copper B (CU(B)). The BNC reduces molecular oxygen to 2 water molecules using 4 electrons from cytochrome c in the IMS and 4 protons from the mitochondrial matrix. In Ceratotherium simum (White rhinoceros), this protein is Cytochrome c oxidase subunit 2 (MT-CO2).